The sequence spans 249 residues: Zinc finger protein CG30 (249 aa).

The segment at 8 to 66 (CHICCSVGEIKNYFLQPVDAITILPIVELHTCRHQLCVMCVRKIAQRGRDKRVECPMCR) adopts an RING-type zinc-finger fold.

The chain is Zinc finger protein CG30 (CG30) from Orgyia pseudotsugata (Douglas-fir tussock moth).